Consider the following 768-residue polypeptide: Phosphoribosylformylglycinamidine synthase subunit PurL (768 aa).

Residue H48 is part of the active site. 2 residues coordinate ATP: Y51 and K90. E92 is a binding site for Mg(2+). Residues 93 to 96 (SHNH) and R115 each bind substrate. The active-site Proton acceptor is the H94. A Mg(2+)-binding site is contributed by D116. Residue Q239 coordinates substrate. D267 provides a ligand contact to Mg(2+). Position 311 to 313 (311 to 313 (ESQ)) interacts with substrate. Residues D507 and G544 each contribute to the ATP site. A Mg(2+)-binding site is contributed by N545. S547 provides a ligand contact to substrate.

This sequence belongs to the FGAMS family. As to quaternary structure, monomer. Part of the FGAM synthase complex composed of 1 PurL, 1 PurQ and 2 PurS subunits.

It is found in the cytoplasm. It carries out the reaction N(2)-formyl-N(1)-(5-phospho-beta-D-ribosyl)glycinamide + L-glutamine + ATP + H2O = 2-formamido-N(1)-(5-O-phospho-beta-D-ribosyl)acetamidine + L-glutamate + ADP + phosphate + H(+). It functions in the pathway purine metabolism; IMP biosynthesis via de novo pathway; 5-amino-1-(5-phospho-D-ribosyl)imidazole from N(2)-formyl-N(1)-(5-phospho-D-ribosyl)glycinamide: step 1/2. Functionally, part of the phosphoribosylformylglycinamidine synthase complex involved in the purines biosynthetic pathway. Catalyzes the ATP-dependent conversion of formylglycinamide ribonucleotide (FGAR) and glutamine to yield formylglycinamidine ribonucleotide (FGAM) and glutamate. The FGAM synthase complex is composed of three subunits. PurQ produces an ammonia molecule by converting glutamine to glutamate. PurL transfers the ammonia molecule to FGAR to form FGAM in an ATP-dependent manner. PurS interacts with PurQ and PurL and is thought to assist in the transfer of the ammonia molecule from PurQ to PurL. This is Phosphoribosylformylglycinamidine synthase subunit PurL from Parasynechococcus marenigrum (strain WH8102).